The chain runs to 96 residues: MPGKIAVEVAYALPEKQYLQRVTLQEGATVEEAIRASGLLELRTDIDLTKNKVGIYSRPAKLSDIVHDGDRVEIYRPLIADPKELRRQRAEKSANK.

This sequence belongs to the UPF0125 (RnfH) family.

The polypeptide is Protein RnfH (Escherichia coli O127:H6 (strain E2348/69 / EPEC)).